The sequence spans 434 residues: Serine--tRNA ligase (434 aa).

An L-serine-binding site is contributed by 239-241; that stretch reads TAE. 270–272 serves as a coordination point for ATP; the sequence is RSE. E293 contacts L-serine. 357–360 serves as a coordination point for ATP; sequence EISS. S392 contributes to the L-serine binding site.

This sequence belongs to the class-II aminoacyl-tRNA synthetase family. Type-1 seryl-tRNA synthetase subfamily. Homodimer. The tRNA molecule binds across the dimer.

It localises to the cytoplasm. The enzyme catalyses tRNA(Ser) + L-serine + ATP = L-seryl-tRNA(Ser) + AMP + diphosphate + H(+). The catalysed reaction is tRNA(Sec) + L-serine + ATP = L-seryl-tRNA(Sec) + AMP + diphosphate + H(+). Its pathway is aminoacyl-tRNA biosynthesis; selenocysteinyl-tRNA(Sec) biosynthesis; L-seryl-tRNA(Sec) from L-serine and tRNA(Sec): step 1/1. Catalyzes the attachment of serine to tRNA(Ser). Is also able to aminoacylate tRNA(Sec) with serine, to form the misacylated tRNA L-seryl-tRNA(Sec), which will be further converted into selenocysteinyl-tRNA(Sec). The sequence is that of Serine--tRNA ligase from Cupriavidus necator (strain ATCC 17699 / DSM 428 / KCTC 22496 / NCIMB 10442 / H16 / Stanier 337) (Ralstonia eutropha).